The following is a 353-amino-acid chain: Photosystem II D2 protein (353 aa).

N-acetylthreonine is present on Thr-2. At Thr-2 the chain carries Phosphothreonine. The chain crosses the membrane as a helical span at residues 41-61 (CAYFSLGGWLTGTTFVTSWYT). Residue His-118 participates in chlorophyll a binding. A helical transmembrane segment spans residues 125–141 (GFMLRQFELARSVQLRP). 2 residues coordinate pheophytin a: Gln-130 and Asn-143. A helical membrane pass occupies residues 153–166 (VFVSVFLIYPLGQS). Residue His-198 participates in chlorophyll a binding. Residues 208-228 (AALLCAIHGATVENTLFEDGD) form a helical membrane-spanning segment. Residues His-215 and Phe-262 each contribute to the a plastoquinone site. His-215 lines the Fe cation pocket. His-269 is a binding site for Fe cation. The helical transmembrane segment at 279 to 295 (GLWMSAIGVVGLALNLR) threads the bilayer.

This sequence belongs to the reaction center PufL/M/PsbA/D family. As to quaternary structure, PSII is composed of 1 copy each of membrane proteins PsbA, PsbB, PsbC, PsbD, PsbE, PsbF, PsbH, PsbI, PsbJ, PsbK, PsbL, PsbM, PsbT, PsbX, PsbY, PsbZ, Psb30/Ycf12, at least 3 peripheral proteins of the oxygen-evolving complex and a large number of cofactors. It forms dimeric complexes. The cofactor is The D1/D2 heterodimer binds P680, chlorophylls that are the primary electron donor of PSII, and subsequent electron acceptors. It shares a non-heme iron and each subunit binds pheophytin, quinone, additional chlorophylls, carotenoids and lipids. There is also a Cl(-1) ion associated with D1 and D2, which is required for oxygen evolution. The PSII complex binds additional chlorophylls, carotenoids and specific lipids..

It is found in the plastid. The protein resides in the chloroplast thylakoid membrane. It carries out the reaction 2 a plastoquinone + 4 hnu + 2 H2O = 2 a plastoquinol + O2. In terms of biological role, photosystem II (PSII) is a light-driven water:plastoquinone oxidoreductase that uses light energy to abstract electrons from H(2)O, generating O(2) and a proton gradient subsequently used for ATP formation. It consists of a core antenna complex that captures photons, and an electron transfer chain that converts photonic excitation into a charge separation. The D1/D2 (PsbA/PsbD) reaction center heterodimer binds P680, the primary electron donor of PSII as well as several subsequent electron acceptors. D2 is needed for assembly of a stable PSII complex. This is Photosystem II D2 protein from Chara vulgaris (Common stonewort).